Reading from the N-terminus, the 667-residue chain is Gamma-tubulin complex component 4 (667 aa).

The tract at residues 424 to 446 (DHKADATQPREVPSRETSPREAP) is disordered.

The protein belongs to the TUBGCP family. In terms of assembly, component of the gamma-tubulin ring complex (gTuRC) consisting of TUBGCP2, TUBGCP3, TUBGCP4, TUBGCP5 and TUBGCP6 and gamma-tubulin TUBG1 or TUBG2. TUBGCP2, TUBGCP3, TUBGCP4, TUBGCP5 and TUBGCP6 assemble in a 5:5:2:1:1 stoichiometry; each is associated with a gamma-tubulin, thereby arranging 14 gamma-tubulins in a helical manner. Gamma-tubulin at the first position is blocked by TUBGCP3 at the last position, allowing 13 protafilaments to grow into a microtubule. The gTuRC (via TUBGCP3 and TUBGCP6) interacts with ACTB and MZT1; the interactions form a luminal bridge that stabilizes the initial structure during complex assembly. The gTuRC (via TUBGCP2) interacts with MZT2A/MZT2B and CDK5RAP2 (via CM1 motif); the interactions play a role in gTuRC activation. Interacts with NINL. Interacts with ATF5; the ATF5:PCNT:polyglutamylated tubulin (PGT) tripartite unites the mother centriole and the pericentriolar material (PCM) in the centrosome.

Its subcellular location is the cytoplasm. It localises to the cytoskeleton. It is found in the microtubule organizing center. The protein localises to the centrosome. In terms of biological role, component of the gamma-tubulin ring complex (gTuRC) which mediates microtubule nucleation. The gTuRC regulates the minus-end nucleation of alpha-beta tubulin heterodimers that grow into microtubule protafilaments, a critical step in centrosome duplication and spindle formation. The protein is Gamma-tubulin complex component 4 (Tubgcp4) of Mus musculus (Mouse).